A 100-amino-acid polypeptide reads, in one-letter code: Urease subunit gamma (100 aa).

It belongs to the urease gamma subunit family. Heterotrimer of UreA (gamma), UreB (beta) and UreC (alpha) subunits. Three heterotrimers associate to form the active enzyme.

It is found in the cytoplasm. The catalysed reaction is urea + 2 H2O + H(+) = hydrogencarbonate + 2 NH4(+). Its pathway is nitrogen metabolism; urea degradation; CO(2) and NH(3) from urea (urease route): step 1/1. The sequence is that of Urease subunit gamma from Mesorhizobium japonicum (strain LMG 29417 / CECT 9101 / MAFF 303099) (Mesorhizobium loti (strain MAFF 303099)).